A 415-amino-acid chain; its full sequence is Mitochondrial distribution and morphology protein 12 (415 aa).

Residues 1-402 (MSFDINWSEL…WPSWVCFDLN (402 aa)) enclose the SMP-LTD domain. The segment at 53 to 146 (EITIRHIGDP…PPLTDLRRSR (94 aa)) is disordered. 2 stretches are compositionally biased toward acidic residues: residues 62-75 (PFDD…DDDE) and 92-103 (NSSDDDEDDEYD).

This sequence belongs to the MDM12 family. As to quaternary structure, component of the ER-mitochondria encounter structure (ERMES) or MDM complex, composed of MMM1, MDM10, MDM12 and MDM34. An MMM1 homodimer associates with one molecule of MDM12 on each side in a pairwise head-to-tail manner, and the SMP-LTD domains of MMM1 and MDM12 generate a continuous hydrophobic tunnel for phospholipid trafficking.

The protein resides in the mitochondrion outer membrane. The protein localises to the endoplasmic reticulum membrane. Functionally, component of the ERMES/MDM complex, which serves as a molecular tether to connect the endoplasmic reticulum (ER) and mitochondria. Components of this complex are involved in the control of mitochondrial shape and protein biogenesis, and function in nonvesicular lipid trafficking between the ER and mitochondria. MDM12 is required for the interaction of the ER-resident membrane protein MMM1 and the outer mitochondrial membrane-resident beta-barrel protein MDM10. The MDM12-MMM1 subcomplex functions in the major beta-barrel assembly pathway that is responsible for biogenesis of all mitochondrial outer membrane beta-barrel proteins, and acts in a late step after the SAM complex. The MDM10-MDM12-MMM1 subcomplex further acts in the TOM40-specific pathway after the action of the MDM12-MMM1 complex. Essential for establishing and maintaining the structure of mitochondria and maintenance of mtDNA nucleoids. The protein is Mitochondrial distribution and morphology protein 12 of Debaryomyces hansenii (strain ATCC 36239 / CBS 767 / BCRC 21394 / JCM 1990 / NBRC 0083 / IGC 2968) (Yeast).